A 118-amino-acid chain; its full sequence is Acidic phospholipase A2 CM-I (118 aa).

7 cysteine pairs are disulfide-bonded: C11-C70, C26-C117, C28-C44, C43-C98, C50-C91, C59-C84, and C77-C89. Residues Y27, G29, and G31 each coordinate Ca(2+). H47 is an active-site residue. D48 serves as a coordination point for Ca(2+). D92 is an active-site residue.

The protein belongs to the phospholipase A2 family. Group I subfamily. D49 sub-subfamily. Requires Ca(2+) as cofactor. In terms of tissue distribution, expressed by the venom gland.

Its subcellular location is the secreted. It catalyses the reaction a 1,2-diacyl-sn-glycero-3-phosphocholine + H2O = a 1-acyl-sn-glycero-3-phosphocholine + a fatty acid + H(+). Snake venom phospholipase A2 (PLA2) that causes myonecrosis when injected intramuscularly, shows indirect hemolytic activity, abolishes twitches evoked by indirect stimulation earlier than those by direct stimulation (in the mouse phrenic nerve-diaphragm preparation) but does not produce complete neuromuscular block (up to 30 ug/ml) (in the chick biventer cervicis nerve-muscle preparation). PLA2 catalyzes the calcium-dependent hydrolysis of the 2-acyl groups in 3-sn-phosphoglycerides. The sequence is that of Acidic phospholipase A2 CM-I from Naja mossambica (Mozambique spitting cobra).